Consider the following 487-residue polypeptide: Histamine H1 receptor (487 aa).

Residues 1-29 (MSLPNSSCLLEDKMCEGNKTTMASPQLMP) lie on the Extracellular side of the membrane. Residues asparagine 5 and asparagine 18 are each glycosylated (N-linked (GlcNAc...) asparagine). Residues 30–50 (LVVVLSTICLVTVGLNLLVLY) traverse the membrane as a helical segment. The Cytoplasmic segment spans residues 51 to 64 (AVRSERKLHTVGNL). The chain crosses the membrane as a helical span at residues 65–89 (YIVSLSVADLIVGAVVMPMNILYLL). The Extracellular segment spans residues 90–97 (MSKWSLGR). The helical transmembrane segment at 98–123 (PLCLFWLSMDYVASTASIFSVFILCI) threads the bilayer. Cysteines 100 and 180 form a disulfide. Histamine is bound by residues aspartate 107 and threonine 112. The segment at 107–112 (DYVAST) is important for agonist binding. Topologically, residues 124–144 (DRYRSVQQPLRYLKYRTKTRA) are cytoplasmic. Residues threonine 140 and threonine 142 each carry the phosphothreonine modification. A helical membrane pass occupies residues 145-164 (SATILGAWFLSFLWVIPILG). Over 165–188 (WNHFMQQTSVRREDKCETDFYDVT) the chain is Extracellular. The helical transmembrane segment at 189-211 (WFKVMTAIINFYLPTLLMLWFYA) threads the bilayer. Asparagine 198 contacts histamine. Residues 212-416 (KIYKAVRQHC…MNRERKAAKQ (205 aa)) are Cytoplasmic-facing. Serine 230 carries the phosphoserine modification. Positions 238–261 (KLRPENPKGDAKKPGKESPWEVLK) are enriched in basic and acidic residues. The disordered stretch occupies residues 238–291 (KLRPENPKGDAKKPGKESPWEVLKRKPKDAGGGSVLKSPSQTPKEMKSPVVFSQ). Threonine 279 bears the Phosphothreonine mark. A phosphoserine mark is found at serine 344 and serine 347. Residues 345 to 379 (EISEDQMLGDSQSFSRTDSDTTTETAPGKGKLRSG) are disordered. A compositionally biased stretch (polar residues) spans 353-369 (GDSQSFSRTDSDTTTET). Phosphoserine is present on residues serine 380, serine 396, and serine 398. A helical membrane pass occupies residues 417–440 (LGFIMAAFILCWIPYFIFFMVIAF). Residues 424 to 428 (FILCW) form an important for agonist binding region. Residue tyrosine 431 participates in histamine binding. Cysteine 441 and cysteine 444 are joined by a disulfide. At 441–446 (CKNCCN) the chain is on the extracellular side. A helical transmembrane segment spans residues 447-469 (EHLHMFTIWLGYINSTLNPLIYP). The Cytoplasmic segment spans residues 470 to 487 (LCNENFKKTFKRILHIRS).

This sequence belongs to the G-protein coupled receptor 1 family. In terms of processing, phosphorylation at sites in the second and third cytoplasmic loops independently contribute to agonist-induced receptor down-regulation.

The protein resides in the cell membrane. Functionally, G-protein-coupled receptor for histamine, a biogenic amine that functions as an immune modulator and a neurotransmitter. Through the H1 receptor, histamine mediates the contraction of smooth muscles and increases capillary permeability due to contraction of terminal venules. Also mediates neurotransmission in the central nervous system and thereby regulates circadian rhythms, emotional and locomotor activities as well as cognitive functions. The sequence is that of Histamine H1 receptor from Homo sapiens (Human).